The sequence spans 411 residues: 1-deoxy-D-xylulose 5-phosphate reductoisomerase (411 aa).

Thr-23, Gly-24, Ser-25, Ile-26, Gly-49, Arg-50, Asn-51, and Asn-137 together coordinate NADPH. Lys-138 contributes to the 1-deoxy-D-xylulose 5-phosphate binding site. An NADPH-binding site is contributed by Glu-139. Residue Asp-163 coordinates Mn(2+). 1-deoxy-D-xylulose 5-phosphate contacts are provided by Ser-164, Glu-165, Ser-199, and His-222. A Mn(2+)-binding site is contributed by Glu-165. Gly-228 lines the NADPH pocket. Ser-235, Asn-240, Lys-241, and Glu-244 together coordinate 1-deoxy-D-xylulose 5-phosphate. Residue Glu-244 participates in Mn(2+) binding.

The protein belongs to the DXR family. Requires Mg(2+) as cofactor. It depends on Mn(2+) as a cofactor.

The enzyme catalyses 2-C-methyl-D-erythritol 4-phosphate + NADP(+) = 1-deoxy-D-xylulose 5-phosphate + NADPH + H(+). The protein operates within isoprenoid biosynthesis; isopentenyl diphosphate biosynthesis via DXP pathway; isopentenyl diphosphate from 1-deoxy-D-xylulose 5-phosphate: step 1/6. Functionally, catalyzes the NADPH-dependent rearrangement and reduction of 1-deoxy-D-xylulose-5-phosphate (DXP) to 2-C-methyl-D-erythritol 4-phosphate (MEP). The polypeptide is 1-deoxy-D-xylulose 5-phosphate reductoisomerase (Mannheimia succiniciproducens (strain KCTC 0769BP / MBEL55E)).